The chain runs to 472 residues: Methylenetetrahydrofolate--tRNA-(uracil-5-)-methyltransferase TrmFO (472 aa).

15–20 (GGGLAG) contributes to the FAD binding site.

Belongs to the MnmG family. TrmFO subfamily. The cofactor is FAD.

Its subcellular location is the cytoplasm. It carries out the reaction uridine(54) in tRNA + (6R)-5,10-methylene-5,6,7,8-tetrahydrofolate + NADH + H(+) = 5-methyluridine(54) in tRNA + (6S)-5,6,7,8-tetrahydrofolate + NAD(+). The catalysed reaction is uridine(54) in tRNA + (6R)-5,10-methylene-5,6,7,8-tetrahydrofolate + NADPH + H(+) = 5-methyluridine(54) in tRNA + (6S)-5,6,7,8-tetrahydrofolate + NADP(+). Catalyzes the folate-dependent formation of 5-methyl-uridine at position 54 (M-5-U54) in all tRNAs. This chain is Methylenetetrahydrofolate--tRNA-(uracil-5-)-methyltransferase TrmFO, found in Rhizobium meliloti (strain 1021) (Ensifer meliloti).